The following is a 240-amino-acid chain: Biosynthetic peptidoglycan transglycosylase (240 aa).

The chain crosses the membrane as a helical span at residues 16–36 (VLMALLCLFLIYELAMFSMVV).

The protein belongs to the glycosyltransferase 51 family.

Its subcellular location is the cell inner membrane. It carries out the reaction [GlcNAc-(1-&gt;4)-Mur2Ac(oyl-L-Ala-gamma-D-Glu-L-Lys-D-Ala-D-Ala)](n)-di-trans,octa-cis-undecaprenyl diphosphate + beta-D-GlcNAc-(1-&gt;4)-Mur2Ac(oyl-L-Ala-gamma-D-Glu-L-Lys-D-Ala-D-Ala)-di-trans,octa-cis-undecaprenyl diphosphate = [GlcNAc-(1-&gt;4)-Mur2Ac(oyl-L-Ala-gamma-D-Glu-L-Lys-D-Ala-D-Ala)](n+1)-di-trans,octa-cis-undecaprenyl diphosphate + di-trans,octa-cis-undecaprenyl diphosphate + H(+). It functions in the pathway cell wall biogenesis; peptidoglycan biosynthesis. In terms of biological role, peptidoglycan polymerase that catalyzes glycan chain elongation from lipid-linked precursors. In Bordetella avium (strain 197N), this protein is Biosynthetic peptidoglycan transglycosylase.